A 381-amino-acid chain; its full sequence is Cytochrome b (381 aa).

4 helical membrane-spanning segments follow: residues 33–53, 77–98, 113–133, and 178–198; these read FGSLLGICLIIQILTGLFLAM, WLLRNLHANGASMFFMCLFLHV, WNIGVILLLTVMATAFVGYVL, and FFAFHFILPFIIVAFAAVHLL. Heme b is bound by residues His-83 and His-97. His-182 and His-196 together coordinate heme b. Position 201 (His-201) interacts with a ubiquinone. The next 4 helical transmembrane spans lie at 226-246, 288-308, 320-340, and 347-367; these read IKDALGLIFLILSLLLLGLFS, LGGVLALLASILILLIIPLLH, IFQTLFWILTADLITLTWIGG, and FIIIGQLALMLYFLLILALMP.

Belongs to the cytochrome b family. As to quaternary structure, the cytochrome bc1 complex contains 11 subunits: 3 respiratory subunits (MT-CYB, CYC1 and UQCRFS1), 2 core proteins (UQCRC1 and UQCRC2) and 6 low-molecular weight proteins (UQCRH/QCR6, UQCRB/QCR7, UQCRQ/QCR8, UQCR10/QCR9, UQCR11/QCR10 and a cleavage product of UQCRFS1). This cytochrome bc1 complex then forms a dimer. The cofactor is heme b.

The protein resides in the mitochondrion inner membrane. Its function is as follows. Component of the ubiquinol-cytochrome c reductase complex (complex III or cytochrome b-c1 complex) that is part of the mitochondrial respiratory chain. The b-c1 complex mediates electron transfer from ubiquinol to cytochrome c. Contributes to the generation of a proton gradient across the mitochondrial membrane that is then used for ATP synthesis. The sequence is that of Cytochrome b (MT-CYB) from Dasykaluta rosamondae (Little red marsupial mouse).